The primary structure comprises 1980 residues: Unconventional myosin-IXb (1980 aa).

An N-acetylserine modification is found at serine 2. The Ras-associating domain occupies 15–114 (ATFHLHIYPQ…YYFLLQERNA (100 aa)). The Myosin motor domain maps to 146 to 954 (ADFDDLCNLP…ERQALQERLH (809 aa)). 239–246 (GESGSGKT) lines the ATP pocket. The tract at residues 715–736 (GVSSPVTRSHVEELPRGANTPS) is disordered. Serine 717 and serine 718 each carry phosphoserine. The segment at 845–856 (KAEPFFIRCIRS) is actin-binding. The tract at residues 941–1045 (LKETERQALQ…CRGHLQRRSF (105 aa)) is neck or regulatory domain. 4 IQ domains span residues 958–978 (LRRILLLQSWFRMVLERRHFV), 981–1001 (KHAALTIQACWRSYRVRRTLE), 1002–1024 (RTRAAVYLQAAWRGYLQRQAYHH), and 1025–1054 (QRHSIIRLQSLCRGHLQRRSFSQMMLEKQK). Serine 1046 carries the phosphoserine modification. Positions 1046 to 1980 (SQMMLEKQKA…ERAVRGAAEE (935 aa)) are tail. Disordered regions lie at residues 1049-1281 (MLEK…HPDT), 1302-1380 (SQSL…QGDS), and 1394-1449 (DKKP…NRKV). A compositionally biased stretch (polar residues) spans 1097 to 1106 (TWMNSKSPNG). 3 positions are modified to phosphoserine: serine 1108, serine 1115, and serine 1177. Composition is skewed to basic and acidic residues over residues 1129–1177 (ESHE…RKAS) and 1186–1195 (EDTKEPREDG). Phosphoserine is present on residues serine 1220, serine 1222, serine 1229, serine 1237, serine 1243, and serine 1247. Residues 1235–1247 (RVSPVLPSSSLES) are compositionally biased toward low complexity. Over residues 1250 to 1265 (DEDKGENSTKVQDKPE) the composition is skewed to basic and acidic residues. 3 positions are modified to phosphoserine: serine 1266, serine 1268, and serine 1304. Threonine 1319 bears the Phosphothreonine mark. Phosphoserine occurs at positions 1327, 1329, and 1337. The segment covering 1327–1344 (SFSTSDVSKLSPVKTSTE) has biased composition (polar residues). The Phorbol-ester/DAG-type zinc finger occupies 1592-1641 (GHVFASYQVNIPQSCEQCLSYIWLMDKALLCSVCKMTCHKKCVHKIQSYC). Serine 1649 is modified (phosphoserine). The Rho-GAP domain maps to 1663-1848 (DSLTSDKASV…MLIKEQMRKY (186 aa)). The tract at residues 1699-1704 (AANRTR) is interaction with RHOA. Positions 1841-1861 (IKEQMRKYKVKMEEINHLEAA) form a coiled coil. Serine 1886 carries the phosphoserine modification. The disordered stretch occupies residues 1891-1923 (VRTKSPRTPVVQDLEELGALPEEAAGGDEDREK). A coiled-coil region spans residues 1918–1948 (DEDREKEILMERIQSIKEEKEDITYRLPELD). Phosphoserine occurs at positions 1932, 1952, and 1959. Residues 1937–1953 (KEDITYRLPELDPRGSD) are compositionally biased toward basic and acidic residues. Residues 1937-1980 (KEDITYRLPELDPRGSDEENLDSETSASTESLLEERAVRGAAEE) are disordered. A Phosphothreonine modification is found at threonine 1965. Basic and acidic residues predominate over residues 1969-1980 (LEERAVRGAAEE).

The protein belongs to the TRAFAC class myosin-kinesin ATPase superfamily. Myosin family. As to quaternary structure, interacts (via IQ domains) with CALM. Interacts with RHOA. Interacts (via Rho-GAP domain) with ROBO1; this inhibits the interaction with RHOA and the stimulation of RHOA GTPase activity, and thereby increases the levels of active RHOA. Expressed in testis, lung, thymus, brain, liver, spleen and heart muscle. Detected in lung, testis, spleen and liver, and at reduced level in different brain regions (at protein level).

Its subcellular location is the cytoplasm. The protein resides in the cell cortex. The protein localises to the perinuclear region. It localises to the cytoskeleton. In terms of biological role, myosins are actin-based motor molecules with ATPase activity. Unconventional myosins serve in intracellular movements. Binds actin with high affinity both in the absence and presence of ATP and its mechanochemical activity is inhibited by calcium ions. Also acts as a GTPase activator for RHOA. Plays a role in the regulation of cell migration via its role as RHOA GTPase activator. This is regulated by its interaction with the SLIT2 receptor ROBO1; interaction with ROBO1 impairs interaction with RHOA and subsequent activation of RHOA GTPase activity, and thereby leads to increased levels of active, GTP-bound RHOA. This is Unconventional myosin-IXb (Myo9b) from Rattus norvegicus (Rat).